A 431-amino-acid polypeptide reads, in one-letter code: CCA-adding enzyme (431 aa).

Residues S50 and K53 each coordinate ATP. CTP contacts are provided by S50 and K53. D61, D63, and D112 together coordinate Mg(2+). Positions 135, 155, and 164 each coordinate ATP. H135, K155, and Y164 together coordinate CTP.

The protein belongs to the tRNA nucleotidyltransferase/poly(A) polymerase family. Archaeal CCA-adding enzyme subfamily. As to quaternary structure, homodimer. It depends on Mg(2+) as a cofactor.

The catalysed reaction is a tRNA precursor + 2 CTP + ATP = a tRNA with a 3' CCA end + 3 diphosphate. It catalyses the reaction a tRNA with a 3' CCA end + 2 CTP + ATP = a tRNA with a 3' CCACCA end + 3 diphosphate. In terms of biological role, catalyzes the addition and repair of the essential 3'-terminal CCA sequence in tRNAs without using a nucleic acid template. Adds these three nucleotides in the order of C, C, and A to the tRNA nucleotide-73, using CTP and ATP as substrates and producing inorganic pyrophosphate. tRNA 3'-terminal CCA addition is required both for tRNA processing and repair. Also involved in tRNA surveillance by mediating tandem CCA addition to generate a CCACCA at the 3' terminus of unstable tRNAs. While stable tRNAs receive only 3'-terminal CCA, unstable tRNAs are marked with CCACCA and rapidly degraded. This chain is CCA-adding enzyme, found in Thermoplasma acidophilum (strain ATCC 25905 / DSM 1728 / JCM 9062 / NBRC 15155 / AMRC-C165).